Reading from the N-terminus, the 320-residue chain is Zona pellucida-binding protein 1 (320 aa).

2 N-linked (GlcNAc...) asparagine glycosylation sites follow: N85 and N158.

It belongs to the zona pellucida-binding protein Sp38 family.

The protein localises to the cytoplasmic vesicle. The protein resides in the secretory vesicle. Its subcellular location is the acrosome. It localises to the secreted. It is found in the acrosome membrane. Plays a role in sperm morphogenesis and in sperm-oocyte interaction during fertilization. The chain is Zona pellucida-binding protein 1 (ZPBP1) from Gallus gallus (Chicken).